The following is a 550-amino-acid chain: Centrosomal and chromosomal factor (550 aa).

3 coiled-coil regions span residues 20–44 (SALSALQQQQQQQQQQHSQTQQQHH), 105–126 (VANSRQQQQQQQQQQQQQQQQQ), and 239–274 (ATSAQQQQQQQQRYQQQQQQLRQQHQQMSQMSQQAH). 4 disordered regions span residues 21–145 (ALSA…KDYS), 208–320 (LSSG…HAAN), 361–380 (SHYAAKGSGGGAGGGKRDAM), and 392–465 (SGKL…SASV). Composition is skewed to low complexity over residues 24–71 (ALQQ…QQQQ), 81–136 (ANTS…NAAP), and 221–320 (AAVA…HAAN). Low complexity-rich tracts occupy residues 396 to 412 (QQSQVQQQQPQQQQQHC) and 450 to 462 (SATPTAGAASGGS).

Homodimer. Interacts with esc, Trl, E(z), scm and ph-p in vitro. Found in vivo in an esc-containing complex, which may be the Esc/E(z) complex. Also found in vivo in a Pc-containing complex that may be the PRC1 complex, but does not interact with Pc directly. Interacts with cyclin CycG.

The protein localises to the nucleus. It is found in the cytoplasm. Its subcellular location is the cytoskeleton. The protein resides in the microtubule organizing center. It localises to the centrosome. The protein localises to the chromosome. Functionally, essential protein required for proper condensation of mitotic chromosomes and progression through mitosis. Binds to specific polytene chromosome sites, many of which are shared with the posterior sex combs (Psc) protein. Involved in maintaining Abd-B repression outside its normal expression domain. In Drosophila melanogaster (Fruit fly), this protein is Centrosomal and chromosomal factor (corto).